We begin with the raw amino-acid sequence, 461 residues long: Flavin-containing monooxygenase FMO GS-OX4 (461 aa).

17–22 lines the FAD pocket; it reads GAGAAG. An NADP(+)-binding site is contributed by 211 to 216; sequence GNFASG.

It belongs to the FMO family.

The catalysed reaction is a (Z)-omega-(methylsulfanyl)-N-sulfo-alkylhydroximate S-glucoside + NADPH + O2 + H(+) = a (Z)-omega-(methylsulfinyl)-alkyl-glucosinolate + NADP(+) + H2O. Its function is as follows. Catalyzes the conversion of methylthioalkyl glucosinolates of any chain length into methylsulfinylalkyl glucosinolates. The chain is Flavin-containing monooxygenase FMO GS-OX4 (FMOGS-OX4) from Arabidopsis thaliana (Mouse-ear cress).